The sequence spans 356 residues: Isopentenyl-diphosphate delta-isomerase (356 aa).

8-9 (RK) lines the substrate pocket. FMN-binding positions include 66–68 (AIT), serine 96, and asparagine 124. A substrate-binding site is contributed by 96–98 (SQR). A substrate-binding site is contributed by glutamine 160. Glutamate 161 contributes to the Mg(2+) binding site. FMN is bound by residues lysine 201, threonine 231, 280–282 (GIR), and 301–302 (AL).

The protein belongs to the IPP isomerase type 2 family. Homooctamer. Dimer of tetramers. Requires FMN as cofactor. NADPH is required as a cofactor. Mg(2+) serves as cofactor.

It localises to the cytoplasm. The catalysed reaction is isopentenyl diphosphate = dimethylallyl diphosphate. In terms of biological role, involved in the biosynthesis of isoprenoids. Catalyzes the 1,3-allylic rearrangement of the homoallylic substrate isopentenyl (IPP) to its allylic isomer, dimethylallyl diphosphate (DMAPP). The polypeptide is Isopentenyl-diphosphate delta-isomerase (Methanococcus aeolicus (strain ATCC BAA-1280 / DSM 17508 / OCM 812 / Nankai-3)).